We begin with the raw amino-acid sequence, 249 residues long: Ribosomal RNA small subunit methyltransferase J (249 aa).

S-adenosyl-L-methionine-binding positions include 101-102 (RD), 117-118 (ER), and aspartate 171.

The protein belongs to the methyltransferase superfamily. RsmJ family.

It is found in the cytoplasm. The catalysed reaction is guanosine(1516) in 16S rRNA + S-adenosyl-L-methionine = N(2)-methylguanosine(1516) in 16S rRNA + S-adenosyl-L-homocysteine + H(+). Functionally, specifically methylates the guanosine in position 1516 of 16S rRNA. The sequence is that of Ribosomal RNA small subunit methyltransferase J from Tolumonas auensis (strain DSM 9187 / NBRC 110442 / TA 4).